Consider the following 937-residue polypeptide: Putative diacylglycerol kinase K06A1.6 (937 aa).

Disordered stretches follow at residues 44–69 and 106–145; these read PPRK…SSRA and SNDS…STNN. Positions 116–129 are enriched in low complexity; that stretch reads VSVSSESSWSSASD. Residues 414 to 551 enclose the DAGKc domain; sequence GPSQPLLVFV…LDRWRIDVEP (138 aa).

This sequence belongs to the eukaryotic diacylglycerol kinase family.

It carries out the reaction a 1,2-diacyl-sn-glycerol + ATP = a 1,2-diacyl-sn-glycero-3-phosphate + ADP + H(+). This chain is Putative diacylglycerol kinase K06A1.6 (dgk-5), found in Caenorhabditis elegans.